The sequence spans 377 residues: Guanine nucleotide-binding protein subunit beta-1 (377 aa).

WD repeat units lie at residues 63–93 (GHTG…IVWN), 105–135 (LPCA…SIFN), 154–185 (GHKG…VLWD), 202–233 (GHTA…RLWD), 246–276 (GHEG…RLFD), 293–323 (GDIP…YVWD), and 339–369 (SHEG…KIWA).

It belongs to the WD repeat G protein beta family. G proteins are composed of 3 units, alpha, beta and gamma.

Guanine nucleotide-binding proteins (G proteins) are involved as a modulator or transducer in various transmembrane signaling systems. The beta and gamma chains are required for the GTPase activity, for replacement of GDP by GTP, and for G protein-effector interaction. This Nicotiana tabacum (Common tobacco) protein is Guanine nucleotide-binding protein subunit beta-1.